The primary structure comprises 430 residues: Ribosomal protein uS12 methylthiotransferase RimO (430 aa).

The MTTase N-terminal domain maps to 2-118 (AKIFTISLGC…IDNVIKRPKH (117 aa)). Residues Cys11, Cys47, Cys81, Cys150, Cys154, and Cys157 each contribute to the [4Fe-4S] cluster site. The Radical SAM core domain occupies 136–368 (LTAPHSAYLK…AQSRVIDSIN (233 aa)). Residues 369-430 (RKLKGKTVKV…KGYNRTGKII (62 aa)) form the TRAM domain.

This sequence belongs to the methylthiotransferase family. RimO subfamily. [4Fe-4S] cluster is required as a cofactor.

The protein localises to the cytoplasm. It carries out the reaction L-aspartate(89)-[ribosomal protein uS12]-hydrogen + (sulfur carrier)-SH + AH2 + 2 S-adenosyl-L-methionine = 3-methylsulfanyl-L-aspartate(89)-[ribosomal protein uS12]-hydrogen + (sulfur carrier)-H + 5'-deoxyadenosine + L-methionine + A + S-adenosyl-L-homocysteine + 2 H(+). Catalyzes the methylthiolation of an aspartic acid residue of ribosomal protein uS12. This chain is Ribosomal protein uS12 methylthiotransferase RimO, found in Elusimicrobium minutum (strain Pei191).